Reading from the N-terminus, the 223-residue chain is ATP-dependent Clp protease proteolytic subunit 2 (223 aa).

Positions 1-40 (MHAGSGNDMDITRMTPTRLDDEPDAPEPETREDDNKTLNS) are disordered. Acidic residues predominate over residues 21–32 (DEPDAPEPETRE). Catalysis depends on Ser124, which acts as the Nucleophile. His149 is a catalytic residue.

Belongs to the peptidase S14 family. Fourteen ClpP subunits assemble into 2 heptameric rings which stack back to back to give a disk-like structure with a central cavity, resembling the structure of eukaryotic proteasomes.

Its subcellular location is the cytoplasm. It catalyses the reaction Hydrolysis of proteins to small peptides in the presence of ATP and magnesium. alpha-casein is the usual test substrate. In the absence of ATP, only oligopeptides shorter than five residues are hydrolyzed (such as succinyl-Leu-Tyr-|-NHMec, and Leu-Tyr-Leu-|-Tyr-Trp, in which cleavage of the -Tyr-|-Leu- and -Tyr-|-Trp bonds also occurs).. Cleaves peptides in various proteins in a process that requires ATP hydrolysis. Has a chymotrypsin-like activity. Plays a major role in the degradation of misfolded proteins. In Gluconobacter oxydans (strain 621H) (Gluconobacter suboxydans), this protein is ATP-dependent Clp protease proteolytic subunit 2.